The primary structure comprises 319 residues: Ferrochelatase (319 aa).

Histidine 193 and glutamate 274 together coordinate Fe cation.

Belongs to the ferrochelatase family.

It is found in the cytoplasm. It carries out the reaction heme b + 2 H(+) = protoporphyrin IX + Fe(2+). It functions in the pathway porphyrin-containing compound metabolism; protoheme biosynthesis; protoheme from protoporphyrin-IX: step 1/1. Its function is as follows. Catalyzes the ferrous insertion into protoporphyrin IX. The protein is Ferrochelatase of Erwinia tasmaniensis (strain DSM 17950 / CFBP 7177 / CIP 109463 / NCPPB 4357 / Et1/99).